A 97-amino-acid polypeptide reads, in one-letter code: Co-chaperonin GroES (97 aa).

Belongs to the GroES chaperonin family. Heptamer of 7 subunits arranged in a ring. Interacts with the chaperonin GroEL.

The protein resides in the cytoplasm. Its function is as follows. Together with the chaperonin GroEL, plays an essential role in assisting protein folding. The GroEL-GroES system forms a nano-cage that allows encapsulation of the non-native substrate proteins and provides a physical environment optimized to promote and accelerate protein folding. GroES binds to the apical surface of the GroEL ring, thereby capping the opening of the GroEL channel. The polypeptide is Co-chaperonin GroES (Yersinia enterocolitica serotype O:8 / biotype 1B (strain NCTC 13174 / 8081)).